Reading from the N-terminus, the 211-residue chain is Pyridoxine/pyridoxamine 5'-phosphate oxidase (211 aa).

Residues R7–Y10 and K65 contribute to the substrate site. Residues R60–K65, Y75–T76, R81, K82, and Q104 contribute to the FMN site. The substrate site is built by Y122, R126, and S130. Residues Q139–S140 and W184 contribute to the FMN site. R190 to H192 contacts substrate. FMN is bound at residue R194.

Belongs to the pyridoxamine 5'-phosphate oxidase family. As to quaternary structure, homodimer. FMN is required as a cofactor.

The enzyme catalyses pyridoxamine 5'-phosphate + O2 + H2O = pyridoxal 5'-phosphate + H2O2 + NH4(+). The catalysed reaction is pyridoxine 5'-phosphate + O2 = pyridoxal 5'-phosphate + H2O2. It participates in cofactor metabolism; pyridoxal 5'-phosphate salvage; pyridoxal 5'-phosphate from pyridoxamine 5'-phosphate: step 1/1. It functions in the pathway cofactor metabolism; pyridoxal 5'-phosphate salvage; pyridoxal 5'-phosphate from pyridoxine 5'-phosphate: step 1/1. In terms of biological role, catalyzes the oxidation of either pyridoxine 5'-phosphate (PNP) or pyridoxamine 5'-phosphate (PMP) into pyridoxal 5'-phosphate (PLP). The polypeptide is Pyridoxine/pyridoxamine 5'-phosphate oxidase (Aliivibrio salmonicida (strain LFI1238) (Vibrio salmonicida (strain LFI1238))).